The following is a 773-amino-acid chain: 4'-phosphopantetheine phosphatase (773 aa).

The residue at position 2 (Ala2) is an N-acetylalanine. Residues 2–402 (AECGASGSGS…SPELGPAQRA (401 aa)) form a pantothenate kinase region. Acetyl-CoA is bound by residues Ser196 and Ser199. Tyr320 is modified (3'-nitrotyrosine). A phosphoserine mark is found at Ser393 and Ser404. A 4'-phosphopantetheine phosphatase region spans residues 403–773 (RSGTFDLLEM…VIFKYEVPAE (371 aa)). The residue at position 406 (Thr406) is a Phosphothreonine. Positions 623, 624, and 659 each coordinate Mn(2+). A Subfamily II EGMGR motif motif is present at residues 724-728 (EGMGR).

It in the N-terminal section; belongs to the type II pantothenate kinase family. In the C-terminal section; belongs to the damage-control phosphatase family. Phosphopantetheine phosphatase II subfamily. As to quaternary structure, homodimer. Interacts with PKM. Requires Mn(2+) as cofactor. The cofactor is Ni(2+). In terms of tissue distribution, widely expressed with high expression in the muscle. Expressed in the retina and lens epithelium, mainly in ganglion cell layer, outer plexiform layer and retinal pigment layer (at protein level).

The protein localises to the cytoplasm. It carries out the reaction (R)-4'-phosphopantetheine + H2O = (R)-pantetheine + phosphate. The catalysed reaction is (R)-4'-phosphopantetheine sulfonate + H2O = (R)-pantetheine sulfonate + phosphate. The enzyme catalyses (R)-4'-phospho-S-sulfopantetheine + H2O = (R)-S-sulfopantetheine + phosphate. Activity is strongly promoted by Co(2+), Ni(2+), Mg(2+) and Mn(2+). Activity is inhibited by EDTA. Phosphatase which shows a preference for 4'-phosphopantetheine and its oxidatively damaged forms (sulfonate or S-sulfonate), providing strong indirect evidence that the phosphatase activity pre-empts damage in the coenzyme A (CoA) pathway. Hydrolyzing excess 4'-phosphopantetheine could constitute a directed overflow mechanism to prevent its oxidation to the S-sulfonate, sulfonate, or other forms. Hydrolyzing 4'-phosphopantetheine sulfonate or S-sulfonate would forestall their conversion to inactive forms of CoA and acyl carrier protein. May play a role in the physiological regulation of CoA intracellular levels. In Homo sapiens (Human), this protein is 4'-phosphopantetheine phosphatase.